A 366-amino-acid polypeptide reads, in one-letter code: Putative type II methyltransferase M.MjaORF1200P (366 aa).

The SAM-dependent MTase C5-type domain maps to L5–K366. C133 is an active-site residue.

It belongs to the class I-like SAM-binding methyltransferase superfamily. C5-methyltransferase family.

The catalysed reaction is a 2'-deoxycytidine in DNA + S-adenosyl-L-methionine = a 5-methyl-2'-deoxycytidine in DNA + S-adenosyl-L-homocysteine + H(+). A putative methylase that probably protects DNA from cleavage by the MjaORF1200P endonuclease. This chain is Putative type II methyltransferase M.MjaORF1200P, found in Methanocaldococcus jannaschii (strain ATCC 43067 / DSM 2661 / JAL-1 / JCM 10045 / NBRC 100440) (Methanococcus jannaschii).